We begin with the raw amino-acid sequence, 536 residues long: Chaperonin GroEL (536 aa).

Residues 29–32 (TLGP), 86–90 (DGTTT), Gly-412, and Asp-493 each bind ATP.

This sequence belongs to the chaperonin (HSP60) family. In terms of assembly, forms a cylinder of 14 subunits composed of two heptameric rings stacked back-to-back. Interacts with the co-chaperonin GroES.

The protein resides in the cytoplasm. The catalysed reaction is ATP + H2O + a folded polypeptide = ADP + phosphate + an unfolded polypeptide.. In terms of biological role, together with its co-chaperonin GroES, plays an essential role in assisting protein folding. The GroEL-GroES system forms a nano-cage that allows encapsulation of the non-native substrate proteins and provides a physical environment optimized to promote and accelerate protein folding. In Onion yellows phytoplasma (strain OY-M), this protein is Chaperonin GroEL.